The chain runs to 319 residues: Type II methyltransferase M.MpnI (319 aa).

It belongs to the N(4)/N(6)-methyltransferase family.

It catalyses the reaction a 2'-deoxyadenosine in DNA + S-adenosyl-L-methionine = an N(6)-methyl-2'-deoxyadenosine in DNA + S-adenosyl-L-homocysteine + H(+). A methylase that recognizes the double-stranded sequence 5'-CTAT-3' and methylates A-3 on one strand; probably responsible for all of the methylation on this site in the genome. This Mycoplasma pneumoniae (strain ATCC 29342 / M129 / Subtype 1) (Mycoplasmoides pneumoniae) protein is Type II methyltransferase M.MpnI.